A 350-amino-acid chain; its full sequence is Spermidine/putrescine import ATP-binding protein PotA (350 aa).

In terms of domain architecture, ABC transporter spans 6–236 (LELRNVTKDY…PENLWVAKFI (231 aa)). 38–45 (GPSGCGKT) serves as a coordination point for ATP.

Belongs to the ABC transporter superfamily. Spermidine/putrescine importer (TC 3.A.1.11.1) family. The complex is composed of two ATP-binding proteins (PotA), two transmembrane proteins (PotB and PotC) and a solute-binding protein (PotD).

The protein localises to the cell membrane. The catalysed reaction is ATP + H2O + polyamine-[polyamine-binding protein]Side 1 = ADP + phosphate + polyamineSide 2 + [polyamine-binding protein]Side 1.. Functionally, part of the ABC transporter complex PotABCD involved in spermidine/putrescine import. Responsible for energy coupling to the transport system. The sequence is that of Spermidine/putrescine import ATP-binding protein PotA from Mesoplasma florum (strain ATCC 33453 / NBRC 100688 / NCTC 11704 / L1) (Acholeplasma florum).